The sequence spans 348 residues: MMQVYHLSHIDLDGYACQLVSKQFFKNIQCYNANYGREVSARIYEILNAIAQSKESEFLILVSDLNLNLNEAEYLQDKIQEHRLQNKNIQIQLLDHHISGKEVAESFHWYFLDINRCATKIVYEFLKKHYAILEPKNTTWLEPLVEMVNSVDIWDTQGYGFELGKVCMRMINQSSELNRFMFDDENRNYKLKLLEEVKNYLFLENAPVAYDNDLFKLKKIALGGDPDAETMDNISSNAQTHLLSLKKHDCSVYYQDKKGFLSYSMGGISVLANLFLTQNPDFDFYMDVNAKGNVSLRANGNCDVCELSQMCFNGGGHRNASGGKIDGFRESFNYRDIKEQIEEIFNNA.

Mn(2+) is required as a cofactor.

It carries out the reaction a nucleoside 3',5'-cyclic phosphate + H2O = a nucleoside 5'-phosphate + H(+). Hydrolyzes cAMP to 5'-AMP and cGMP to 5'-GMP. Does not show phosphohydrolase activity toward various phosphatidylcholine and phosphorylated sugars. The polypeptide is 3',5'-cyclic-nucleotide phosphodiesterase (Helicobacter pylori (strain ATCC 700392 / 26695) (Campylobacter pylori)).